The primary structure comprises 235 residues: Aspartate/glutamate leucyltransferase (235 aa).

It belongs to the R-transferase family. Bpt subfamily.

The protein resides in the cytoplasm. It catalyses the reaction N-terminal L-glutamyl-[protein] + L-leucyl-tRNA(Leu) = N-terminal L-leucyl-L-glutamyl-[protein] + tRNA(Leu) + H(+). The catalysed reaction is N-terminal L-aspartyl-[protein] + L-leucyl-tRNA(Leu) = N-terminal L-leucyl-L-aspartyl-[protein] + tRNA(Leu) + H(+). Its function is as follows. Functions in the N-end rule pathway of protein degradation where it conjugates Leu from its aminoacyl-tRNA to the N-termini of proteins containing an N-terminal aspartate or glutamate. The polypeptide is Aspartate/glutamate leucyltransferase (Pseudomonas paraeruginosa (strain DSM 24068 / PA7) (Pseudomonas aeruginosa (strain PA7))).